The sequence spans 244 residues: Venom nerve growth factor 2 (244 aa).

The N-terminal stretch at 1-18 (MSMLCYTLIIAFLIGIWA) is a signal peptide. The propeptide occupies 19-125 (APKSEDNVPL…TLNRNIRAKR (107 aa)). Residues 47–66 (GLKTSRNTDQRHPAPKKAED) are compositionally biased toward basic and acidic residues. Residues 47-69 (GLKTSRNTDQRHPAPKKAEDQEL) are disordered. 2 disulfides stabilise this stretch: Cys-139/Cys-205 and Cys-181/Cys-233.

The protein belongs to the NGF-beta family. As to quaternary structure, homodimer; non-covalently linked. As to expression, expressed by the venom gland.

It localises to the secreted. In terms of biological role, nerve growth factor is important for the development and maintenance of the sympathetic and sensory nervous systems. It stimulates division and differentiation of sympathetic and embryonic sensory neurons as well as basal forebrain cholinergic neurons in the brain. Its relevance in the snake venom is not clear. However, it has been shown to inhibit metalloproteinase-dependent proteolysis of platelet glycoprotein Ib alpha, suggesting a metalloproteinase inhibition to prevent metalloprotease autodigestion and/or protection against prey proteases. Binds a lipid between the two protein chains in the homodimer. The lipid-bound form promotes histamine relase from mouse mast cells, contrary to the lipid-free form. In Notechis scutatus scutatus (Mainland tiger snake), this protein is Venom nerve growth factor 2.